Consider the following 509-residue polypeptide: ATP synthase subunit alpha, mitochondrial (509 aa).

ATP is bound at residue G171–T178.

It belongs to the ATPase alpha/beta chains family. As to quaternary structure, F-type ATPases have 2 components, CF(1) - the catalytic core - and CF(0) - the membrane proton channel. CF(1) has five subunits: alpha(3), beta(3), gamma(1), delta(1), epsilon(1). CF(0) has three main subunits: a, b and c.

Its subcellular location is the mitochondrion. It localises to the mitochondrion inner membrane. In terms of biological role, mitochondrial membrane ATP synthase (F(1)F(0) ATP synthase or Complex V) produces ATP from ADP in the presence of a proton gradient across the membrane which is generated by electron transport complexes of the respiratory chain. F-type ATPases consist of two structural domains, F(1) - containing the extramembraneous catalytic core, and F(0) - containing the membrane proton channel, linked together by a central stalk and a peripheral stalk. During catalysis, ATP synthesis in the catalytic domain of F(1) is coupled via a rotary mechanism of the central stalk subunits to proton translocation. Subunits alpha and beta form the catalytic core in F(1). Rotation of the central stalk against the surrounding alpha(3)beta(3) subunits leads to hydrolysis of ATP in three separate catalytic sites on the beta subunits. Subunit alpha does not bear the catalytic high-affinity ATP-binding sites. This Triticum aestivum (Wheat) protein is ATP synthase subunit alpha, mitochondrial (ATPA).